Consider the following 160-residue polypeptide: Archaemetzincin (160 aa).

Zn(2+) is bound at residue His117. Residue Glu118 is the Proton acceptor of the active site. Residues His121, His127, Cys128, Cys132, Cys151, and Cys154 each contribute to the Zn(2+) site.

The protein belongs to the peptidase M54 family. In terms of assembly, monomer. Requires Zn(2+) as cofactor.

Its function is as follows. Probable zinc metalloprotease whose natural substrate is unknown. The sequence is that of Archaemetzincin from Archaeoglobus fulgidus (strain ATCC 49558 / DSM 4304 / JCM 9628 / NBRC 100126 / VC-16).